Reading from the N-terminus, the 202-residue chain is Tetranectin (202 aa).

The signal sequence occupies residues 1–21; it reads MELWGPCVLLCLFSLLTQVTA. Cystine bridges form between cysteine 71-cysteine 81, cysteine 98-cysteine 197, and cysteine 173-cysteine 189. In terms of domain architecture, C-type lectin spans 77–198; that stretch reads VHMKCFLAFV…CRDKLPYVCQ (122 aa).

Homotrimer.

The protein resides in the secreted. In terms of biological role, tetranectin binds to plasminogen and to isolated kringle 4. May be involved in the packaging of molecules destined for exocytosis. Plays a role in retinal function. The sequence is that of Tetranectin (CLEC3B) from Bos taurus (Bovine).